The chain runs to 95 residues: Small ribosomal subunit protein bS6 (95 aa).

The protein belongs to the bacterial ribosomal protein bS6 family.

Its function is as follows. Binds together with bS18 to 16S ribosomal RNA. The polypeptide is Small ribosomal subunit protein bS6 (Acholeplasma laidlawii (strain PG-8A)).